The following is a 206-amino-acid chain: ATP phosphoribosyltransferase (206 aa).

This sequence belongs to the ATP phosphoribosyltransferase family. Short subfamily. In terms of assembly, heteromultimer composed of HisG and HisZ subunits.

It localises to the cytoplasm. It carries out the reaction 1-(5-phospho-beta-D-ribosyl)-ATP + diphosphate = 5-phospho-alpha-D-ribose 1-diphosphate + ATP. Its pathway is amino-acid biosynthesis; L-histidine biosynthesis; L-histidine from 5-phospho-alpha-D-ribose 1-diphosphate: step 1/9. Catalyzes the condensation of ATP and 5-phosphoribose 1-diphosphate to form N'-(5'-phosphoribosyl)-ATP (PR-ATP). Has a crucial role in the pathway because the rate of histidine biosynthesis seems to be controlled primarily by regulation of HisG enzymatic activity. This chain is ATP phosphoribosyltransferase, found in Geobacillus sp. (strain WCH70).